Consider the following 348-residue polypeptide: Haptoglobin-related protein (348 aa).

The not cleaved signal peptide spans 1–18 (MSDLGAVISLLLWGRQLF). Residues 34–87 (FPKPPEIANGYVEHLFRYQCKNYYRLRTEGDGVYTLNDKKQWINKAVGDKLPEC) form the Sushi domain. The Peptidase S1 domain maps to 104-346 (ILGGHLDAKG…IQHWVQKTIA (243 aa)). Disulfide bonds link cysteine 251-cysteine 282 and cysteine 293-cysteine 323.

The protein belongs to the peptidase S1 family. As to expression, in adult liver the amount of HPR mRNA is at the lower limit of detection, therefore the extent of its expression is at most less than 1000-fold that of the HP1F gene. No HPR mRNA can be detected in fetal liver. Expressed in Hep-G2 and leukemia MOLT-4 cell lines.

The protein localises to the secreted. Its function is as follows. Primate-specific plasma protein associated with apolipoprotein L-I (apoL-I)-containing high-density lipoprotein (HDL). This HDL particle, termed trypanosome lytic factor-1 (TLF-1), mediates human innate immune protection against many species of African trypanosomes. Binds hemoglobin with high affinity and may contribute to the clearance of cell-free hemoglobin to allow hepatic recycling of heme iron. This is Haptoglobin-related protein (HPR) from Homo sapiens (Human).